The chain runs to 255 residues: Putative keratin-87 protein (255 aa).

Positions Met1–Leu255 constitute an IF rod domain. 2 coiled-coil regions span residues Leu19–Val81 and Leu147–Ser227.

The protein belongs to the intermediate filament family. As to quaternary structure, heterotetramer of two type I and two type II keratins.

This is Putative keratin-87 protein (KRT87P) from Homo sapiens (Human).